We begin with the raw amino-acid sequence, 1026 residues long: Multidrug resistance protein MdtC (1026 aa).

The next 11 helical transmembrane spans lie at 15-35 (ILIA…LPVA), 333-353 (EVEE…FLFL), 360-380 (LIPA…MYLC), 387-407 (LSLM…IVVL), 431-451 (VGFT…PLLL), 463-483 (FAVT…TLTP), 528-548 (LVGV…IAIP), 853-873 (LILI…LYES), 897-917 (LFNA…IGIV), 953-973 (PIMM…LSGG), and 984-1004 (ITIV…TPVV).

It belongs to the resistance-nodulation-cell division (RND) (TC 2.A.6) family. MdtC subfamily. As to quaternary structure, part of a tripartite efflux system composed of MdtA, MdtB and MdtC. MdtC forms a heteromultimer with MdtB.

Its subcellular location is the cell inner membrane. This chain is Multidrug resistance protein MdtC, found in Salmonella paratyphi A (strain ATCC 9150 / SARB42).